A 280-amino-acid chain; its full sequence is ESX-1 secretion-associated protein EspJ (280 aa).

At S70 the chain carries Phosphoserine. Low complexity-rich tracts occupy residues 167–181 (QTIS…QSAQ) and 246–280 (PAQA…TTTL). The disordered stretch occupies residues 167–280 (QTISQTAQQA…TPAPSTTTTL (114 aa)).

As to quaternary structure, residues 76-280 interact with EsxB and an artificial EsxB-EsxA heterodimer. In terms of processing, phosphorylated at Ser-70.

The protein resides in the secreted. In terms of biological role, could be involved in regulation of growth and intracellular survival. The sequence is that of ESX-1 secretion-associated protein EspJ from Mycobacterium tuberculosis (strain ATCC 25618 / H37Rv).